The chain runs to 274 residues: Penicillin-insensitive murein endopeptidase (274 aa).

The first 19 residues, 1-19 (MNKTAIALLALLASSASLA), serve as a signal peptide directing secretion. 3 cysteine pairs are disulfide-bonded: Cys44–Cys265, Cys187–Cys235, and Cys216–Cys223. The Zn(2+) site is built by His110, His113, Asp120, Asp147, His150, and His211. A disordered region spans residues 228–264 (LPPPGDGCGAELQSWFAPPKPGTTKPEKKTPSPLPPS).

This sequence belongs to the peptidase M74 family. In terms of assembly, dimer. The cofactor is Zn(2+).

The protein resides in the periplasm. In terms of biological role, murein endopeptidase that cleaves the D-alanyl-meso-2,6-diamino-pimelyl amide bond that connects peptidoglycan strands. Likely plays a role in the removal of murein from the sacculus. The protein is Penicillin-insensitive murein endopeptidase of Escherichia coli (strain 55989 / EAEC).